The primary structure comprises 169 residues: Glycine-rich RNA-binding protein 10 (169 aa).

In terms of domain architecture, RRM spans 6–84; sequence YRCFVGGLAW…RTITVNEAQS (79 aa). Disordered stretches follow at residues 80 to 101 and 121 to 169; these read NEAQ…YGGR and GYGS…GGGW. Over residues 85-101 the composition is skewed to gly residues; the sequence is RGGGGGGGRGGGGYGGR.

Expressed only in roots and stems.

Its function is as follows. Possibly has a role in RNA transcription or processing during stress. The chain is Glycine-rich RNA-binding protein 10 (GRP10) from Brassica napus (Rape).